The primary structure comprises 277 residues: Diaminopimelate epimerase (277 aa).

Substrate-binding residues include asparagine 13, glutamine 46, and asparagine 66. The active-site Proton donor is cysteine 75. Substrate-binding positions include 76–77, asparagine 159, asparagine 192, and 210–211; these read GN and ER. Residue cysteine 219 is the Proton acceptor of the active site. 220–221 serves as a coordination point for substrate; the sequence is GT.

The protein belongs to the diaminopimelate epimerase family. In terms of assembly, homodimer.

The protein localises to the cytoplasm. It carries out the reaction (2S,6S)-2,6-diaminopimelate = meso-2,6-diaminopimelate. It functions in the pathway amino-acid biosynthesis; L-lysine biosynthesis via DAP pathway; DL-2,6-diaminopimelate from LL-2,6-diaminopimelate: step 1/1. Its function is as follows. Catalyzes the stereoinversion of LL-2,6-diaminopimelate (L,L-DAP) to meso-diaminopimelate (meso-DAP), a precursor of L-lysine and an essential component of the bacterial peptidoglycan. This is Diaminopimelate epimerase from Aromatoleum aromaticum (strain DSM 19018 / LMG 30748 / EbN1) (Azoarcus sp. (strain EbN1)).